The following is a 392-amino-acid chain: GPI alpha-1,4-mannosyltransferase I, catalytic subunit (392 aa).

At 1–4 (MEAR) the chain is on the cytoplasmic side. Residues 5-25 (VCVLFGAAALLRLLLLCVGVY) traverse the membrane as a helical segment. At 26 to 65 (QDQTLKLKYTDVDYHVFTDAARFITQGESPYRRSTFRYTP) the chain is on the lumenal side. Residues 66–86 (LLALLLVPNVYLSLLFGKLLF) form a helical membrane-spanning segment. Topologically, residues 87 to 125 (GFCDLLSGLLMFRLLVLRGASHGSACVSCGLWLLNPLPM) are cytoplasmic. A helical membrane pass occupies residues 126-148 (AVSTRGNAESVLAVLVLSTLLCL). The Lumenal segment spans residues 149–156 (QLRKHTTA). Residues 157 to 177 (ALLFGLSVHMKIYPVTYALPI) traverse the membrane as a helical segment. Topologically, residues 178-198 (ALALTAAPARGRGVLLRFFSP) are cytoplasmic. The helical transmembrane segment at 199–219 (ALLRFAAVSAAVFLSLGLIFY) threads the bilayer. The Lumenal segment spans residues 220 to 261 (CRYGWEFLQEAYLYHLTRRDLRHNFSPFFYLQYVCAERCWSS). The chain crosses the membrane as a helical span at residues 262 to 282 (GLLPLLLLPQLLLLLLASAAF). The Cytoplasmic portion of the chain corresponds to 283 to 302 (SSDLPFCCFLHTAVFVSFNR). The helical transmembrane segment at 303–323 (VCTSQYFLWYLCLLPVVLPRL) threads the bilayer. Topologically, residues 324 to 330 (RLRLGRG) are lumenal. Residues 331–351 (LLLLLLWLLLQGLWLAPAYLL) form a helical membrane-spanning segment. Over 352–360 (EFQGWNSFS) the chain is Cytoplasmic. A helical transmembrane segment spans residues 361–381 (WIWAASLLFLLTNTFILAQII). The Lumenal segment spans residues 382–392 (QHYRPHDRKAD).

This sequence belongs to the PIGM family. Part of the glycosylphosphatidylinositol-mannosyltransferase I complex that is composed of PIGM and PIGX.

The protein localises to the endoplasmic reticulum membrane. It functions in the pathway glycolipid biosynthesis; glycosylphosphatidylinositol-anchor biosynthesis. Catalytic subunit of the glycosylphosphatidylinositol-mannosyltransferase I complex which catalyzes the transfer of the first mannose, via an alpha-1,4 bond from a dolichol-phosphate-mannose (Dol-P-Man) to the glucosaminyl acyl phosphatidylinositol (GlcN-(acyl)PI) intermediate to generate alpha-D-Man-(1-&gt;4)-alpha-D-GlcN-(1-&gt;6)-(1-radyl,2-acyl-sn-glycero-3-phospho)-2-acyl-inositol and participates in the sixth step of the glycosylphosphatidylinositol-anchor biosynthesis. The chain is GPI alpha-1,4-mannosyltransferase I, catalytic subunit from Danio rerio (Zebrafish).